Here is a 386-residue protein sequence, read N- to C-terminus: O-methyltransferase 11 (386 aa).

Ser-207, Gly-231, Asp-254, Asp-274, and Lys-288 together coordinate S-adenosyl-L-homocysteine. An S-adenosyl-L-methionine-binding site is contributed by Asp-254. The active-site Proton acceptor is His-292.

The protein belongs to the class I-like SAM-binding methyltransferase superfamily. Cation-independent O-methyltransferase family. Homodimer.

The enzyme catalyses dopamine + S-adenosyl-L-methionine = 4-methoxytyramine + S-adenosyl-L-homocysteine + H(+). It carries out the reaction 3,4-dihydroxy-5-methoxyphenethylamine + S-adenosyl-L-methionine = 3-hydroxy-4,5-dimethoxyphenethylamine + S-adenosyl-L-homocysteine + H(+). The catalysed reaction is 3-hydroxy-4,5-dimethoxyphenethylamine + S-adenosyl-L-methionine = mescaline + S-adenosyl-L-homocysteine + H(+). It catalyses the reaction 4-hydroxy-3,5-dimethoxyphenethylamine + S-adenosyl-L-methionine = mescaline + S-adenosyl-L-homocysteine + H(+). It functions in the pathway aromatic compound metabolism. The protein operates within alkaloid biosynthesis. Its function is as follows. O-methyltransferase participating in the biosynthesis of natural products derived from phenylethylamine, including mescaline, a natural hallucinogen potentially used in psychotherapeutic treatments. Catalyzes the O-methylation of mescaline para hydroxyl groups, using dopamine, 3,4-dihydroxy-5-methoxyphenethylamine, 3-hydroxy-4,5-dimethoxyphenethylamine and 4-hydroxy-3,5-dimethoxyphenethylamine as substrates. The chain is O-methyltransferase 11 from Lophophora williamsii (Peyote).